A 417-amino-acid polypeptide reads, in one-letter code: Calreticulin (417 aa).

A signal peptide spans 1–17; it reads MLLSVPLLLGLLGLAAA. Positions 18–197 are N-domain; sequence EPAVYFKEQF…NSQVESGSLE (180 aa). Q26 is a Ca(2+) binding site. An N6-acetyllysine modification is found at K48. The Ca(2+) site is built by K62 and K64. K64 is modified (N6-(2-hydroxyisobutyryl)lysine). Residues C105 and C137 are joined by a disulfide bond. An alpha-D-glucoside-binding residues include Y109, K111, Y128, and D135. An N6-acetyllysine modification is found at K159. The 1-1 repeat unit spans residues 191-202; sequence VESGSLEDDWDF. The 4 X approximate repeats stretch occupies residues 191-255; that stretch reads VESGSLEDDW…DAKKPEDWDE (65 aa). The segment at 193–277 is disordered; it reads SGSLEDDWDF…NPEYKGEWKP (85 aa). The P-domain stretch occupies residues 198 to 308; sequence DDWDFLPPKK…YSPDANIYAY (111 aa). The span at 207 to 251 shows a compositional bias: basic and acidic residues; that stretch reads KIKDPDAAKPEDWDERAKIDDPTDSKPEDWDKPEHIPDPDAKKPE. Position 209 is an N6-acetyllysine (K209). A run of 6 repeats spans residues 210–221, 227–238, 244–255, 259–269, 273–283, and 287–297. Residues 237 to 270 form an interaction with PPIB region; that stretch reads DKPEHIPDPDAKKPEDWDEEMDGEWEPPVIQNPE. Acidic residues predominate over residues 252–261; it reads DWDEEMDGEW. Positions 259-297 are 3 X approximate repeats; sequence GEWEPPVIQNPEYKGEWKPRQIDNPDYKGTWIHPEIDNP. The segment at 309–417 is C-domain; that stretch reads DSFAVLGLDL…TTPGQTKDEL (109 aa). D317 lines the an alpha-D-glucoside pocket. D328 provides a ligand contact to Ca(2+). The disordered stretch occupies residues 350-417; the sequence is TKASEKQMKD…TTPGQTKDEL (68 aa). Residues 352-379 are compositionally biased toward basic and acidic residues; the sequence is ASEKQMKDKQDEEQRLKEEEEDKKRKEE. Positions 380 to 408 are enriched in acidic residues; sequence EEAEDKEDEDDRDEDEEDEDEKEEDEEDT. Positions 414-417 match the Prevents secretion from ER motif; it reads KDEL.

Belongs to the calreticulin family. Monomer. Component of an EIF2 complex at least composed of CELF1/CUGBP1, CALR, CALR3, EIF2S1, EIF2S2, HSP90B1 and HSPA5. Interacts with PDIA3/ERp57 and SPACA9. Interacts with TRIM21. Interacts with NR3C1. Interacts with PPIB. Interacts (via P-domain) with PDIA5. Interacts with GABARAP. Interacts with CLCC1.

It localises to the endoplasmic reticulum lumen. The protein localises to the cytoplasm. Its subcellular location is the cytosol. The protein resides in the cytolytic granule. It is found in the secreted. It localises to the extracellular space. The protein localises to the extracellular matrix. Its subcellular location is the cell surface. The protein resides in the sarcoplasmic reticulum lumen. It is found in the cytoplasmic vesicle. It localises to the secretory vesicle. The protein localises to the cortical granule. Calcium-binding chaperone that promotes folding, oligomeric assembly and quality control in the endoplasmic reticulum (ER) via the calreticulin/calnexin cycle. This lectin interacts transiently with almost all of the monoglucosylated glycoproteins that are synthesized in the ER. Interacts with the DNA-binding domain of NR3C1 and mediates its nuclear export. Involved in maternal gene expression regulation. May participate in oocyte maturation via the regulation of calcium homeostasis. Present in the cortical granules of non-activated oocytes, is exocytosed during the cortical reaction in response to oocyte activation and might participate in the block to polyspermy. The sequence is that of Calreticulin (CALR) from Cricetulus griseus (Chinese hamster).